The following is a 571-amino-acid chain: Chaperonin GroEL 1 (571 aa).

ATP contacts are provided by residues 29–32 (TLGP), Lys-50, 86–90 (DGTTT), Gly-416, and Asp-498.

It belongs to the chaperonin (HSP60) family. As to quaternary structure, forms a cylinder of 14 subunits composed of two heptameric rings stacked back-to-back. Interacts with the co-chaperonin GroES.

The protein localises to the cytoplasm. It carries out the reaction ATP + H2O + a folded polypeptide = ADP + phosphate + an unfolded polypeptide.. Its function is as follows. Together with its co-chaperonin GroES, plays an essential role in assisting protein folding. The GroEL-GroES system forms a nano-cage that allows encapsulation of the non-native substrate proteins and provides a physical environment optimized to promote and accelerate protein folding. The polypeptide is Chaperonin GroEL 1 (Rhodopirellula baltica (strain DSM 10527 / NCIMB 13988 / SH1)).